A 27-amino-acid chain; its full sequence is Natriuretic peptides A (27 aa).

A disulfide bridge connects residues Cys-7 and Cys-23.

Belongs to the natriuretic peptide family.

It is found in the secreted. Functionally, hormone playing a key role in cardiovascular homeostasis through regulation of natriuresis, diuresis, and vasodilation. Has a cGMP-stimulating activity. The polypeptide is Natriuretic peptides A (nppa) (Anguilla japonica (Japanese eel)).